The primary structure comprises 482 residues: UDP-N-acetylmuramate--L-alanine ligase (482 aa).

An ATP-binding site is contributed by 123 to 129 (GTHGKTT).

Belongs to the MurCDEF family.

Its subcellular location is the cytoplasm. It catalyses the reaction UDP-N-acetyl-alpha-D-muramate + L-alanine + ATP = UDP-N-acetyl-alpha-D-muramoyl-L-alanine + ADP + phosphate + H(+). It participates in cell wall biogenesis; peptidoglycan biosynthesis. In terms of biological role, cell wall formation. This Pseudomonas entomophila (strain L48) protein is UDP-N-acetylmuramate--L-alanine ligase.